We begin with the raw amino-acid sequence, 209 residues long: MAKFTVLNHPLIQHKLTIIRNKNTGTKVFREVANEIAELMVYEITRDLAMEDVEVETPMGPAIEKQLSGKKLAVVPILRAGLGMVDGVLELIPAAKVGHIGMYRDEKTLQPHEYFVKLPTDIDQRQLFIVDPMLATGGSAIMAIDALKKRGATSMRLVVLVAAPEGVKAVQEAHPDVDIYAAGLDDGLNEEGYIYPGLGDAGDRLFGTK.

Residues R79, R104, and 131–139 (DPMLATGGS) contribute to the 5-phospho-alpha-D-ribose 1-diphosphate site. Uracil-binding positions include I194 and 199-201 (GDA). D200 is a 5-phospho-alpha-D-ribose 1-diphosphate binding site.

It belongs to the UPRTase family. Mg(2+) is required as a cofactor.

It catalyses the reaction UMP + diphosphate = 5-phospho-alpha-D-ribose 1-diphosphate + uracil. Its pathway is pyrimidine metabolism; UMP biosynthesis via salvage pathway; UMP from uracil: step 1/1. With respect to regulation, allosterically activated by GTP. In terms of biological role, catalyzes the conversion of uracil and 5-phospho-alpha-D-ribose 1-diphosphate (PRPP) to UMP and diphosphate. In Latilactobacillus sakei (Lactobacillus sakei), this protein is Uracil phosphoribosyltransferase.